The sequence spans 344 residues: tRNA N6-adenosine threonylcarbamoyltransferase (344 aa).

Fe cation is bound by residues His119 and His123. Residues 141–145 (VVSGG), Asp174, Gly187, Asp191, and Asn280 each bind substrate. Asp310 serves as a coordination point for Fe cation.

This sequence belongs to the KAE1 / TsaD family. Fe(2+) is required as a cofactor.

Its subcellular location is the cytoplasm. The catalysed reaction is L-threonylcarbamoyladenylate + adenosine(37) in tRNA = N(6)-L-threonylcarbamoyladenosine(37) in tRNA + AMP + H(+). Functionally, required for the formation of a threonylcarbamoyl group on adenosine at position 37 (t(6)A37) in tRNAs that read codons beginning with adenine. Is involved in the transfer of the threonylcarbamoyl moiety of threonylcarbamoyl-AMP (TC-AMP) to the N6 group of A37, together with TsaE and TsaB. TsaD likely plays a direct catalytic role in this reaction. The polypeptide is tRNA N6-adenosine threonylcarbamoyltransferase (Listeria welshimeri serovar 6b (strain ATCC 35897 / DSM 20650 / CCUG 15529 / CIP 8149 / NCTC 11857 / SLCC 5334 / V8)).